A 63-amino-acid polypeptide reads, in one-letter code: Large ribosomal subunit protein bL32c (63 aa).

The disordered stretch occupies residues 39–63 (SFSSGNEHPKPKGFSGQQTNNKIFE). Over residues 53 to 63 (SGQQTNNKIFE) the composition is skewed to polar residues.

This sequence belongs to the bacterial ribosomal protein bL32 family.

It localises to the plastid. The protein resides in the chloroplast. The chain is Large ribosomal subunit protein bL32c from Triticum aestivum (Wheat).